Consider the following 166-residue polypeptide: MISDESDRFNPRDPKPADAGKPSKSAKRREARKLATQALYQWHMAQHSLNEIEAQFRVDNDFTDVDGAYFREILHGVPAIKGEIDKALVPCMTIALEELDPVELAVLRLSTWELIKRVDVPYRVVINEGVELAKVFGATDGHKFVNGVLDKLAPALREAEVKANKR.

Residues 1-18 (MISDESDRFNPRDPKPAD) are compositionally biased toward basic and acidic residues. Residues 1 to 28 (MISDESDRFNPRDPKPADAGKPSKSAKR) form a disordered region.

It belongs to the NusB family.

Its function is as follows. Involved in transcription antitermination. Required for transcription of ribosomal RNA (rRNA) genes. Binds specifically to the boxA antiterminator sequence of the ribosomal RNA (rrn) operons. The sequence is that of Transcription antitermination protein NusB from Pseudomonas putida (strain GB-1).